The following is a 500-amino-acid chain: Pyoverdin chromophore biosynthetic protein PvcC (500 aa).

FAD is required as a cofactor.

Its pathway is siderophore biosynthesis; pyoverdin biosynthesis. This is Pyoverdin chromophore biosynthetic protein PvcC (pvcC) from Pseudomonas aeruginosa (strain ATCC 15692 / DSM 22644 / CIP 104116 / JCM 14847 / LMG 12228 / 1C / PRS 101 / PAO1).